A 341-amino-acid polypeptide reads, in one-letter code: L-threonine 3-dehydrogenase (341 aa).

C38 is a binding site for Zn(2+). Catalysis depends on charge relay system residues T40 and H43. Zn(2+) contacts are provided by H63, E64, C93, C96, C99, and C107. Residues I175, D195, R200, 262–264, and 286–287 contribute to the NAD(+) site; these read LGI and IY.

Belongs to the zinc-containing alcohol dehydrogenase family. In terms of assembly, homotetramer. Requires Zn(2+) as cofactor.

The protein localises to the cytoplasm. The catalysed reaction is L-threonine + NAD(+) = (2S)-2-amino-3-oxobutanoate + NADH + H(+). The protein operates within amino-acid degradation; L-threonine degradation via oxydo-reductase pathway; glycine from L-threonine: step 1/2. Catalyzes the NAD(+)-dependent oxidation of L-threonine to 2-amino-3-ketobutyrate. In Escherichia coli O127:H6 (strain E2348/69 / EPEC), this protein is L-threonine 3-dehydrogenase.